We begin with the raw amino-acid sequence, 2303 residues long: Adenomatous polyposis coli protein 2 (2303 aa).

Positions 8 to 59 (YEQLVRQVEALKAENSHLRQELRDNSSHLSKLETETSGMKEVLKHLQGKLEQ) form a coiled coil. 2 disordered regions span residues 94-120 (PTLG…KDSF) and 247-270 (VPVD…QPGN). 6 ARM repeats span residues 302–341 (PESC…PGAK), 479–518 (ANKA…NLSW), 522–562 (INSK…NLSA), 566–609 (ENKA…NVSS), 615–654 (EDYR…NLSA), and 657–696 (ARDQ…NLLA). 2 disordered regions span residues 744-764 (KQGP…LRHL) and 816-835 (LART…DTSG). A compositionally biased stretch (basic and acidic residues) spans 825–834 (GGKEAEKDTS). The stretch at 840–864 (AAKAKAKLALAVARIDQLVEDISAL) forms a coiled coil. 4 disordered regions span residues 867 to 908 (SSDD…AGSR), 953 to 986 (RRED…ATSA), 1069 to 1152 (RCSS…ENYV), and 1173 to 1228 (SPSI…EATQ). Low complexity predominate over residues 869–878 (DDSFSLSSGD). Copy 1 of the repeat occupies 1058–1077 (LAAQEGPLSLSRCSSLSSLS). The 5 X 20 AA approximate repeat of F-X-V-E-X-T-P-X-C-F-S-R-X-S-S-L-S-S-L-S stretch occupies residues 1058–1587 (LAAQEGPLSL…SLSSSASSLS (530 aa)). The tract at residues 1058–1587 (LAAQEGPLSL…SLSSSASSLS (530 aa)) is interaction with CTNNB1. A compositionally biased stretch (low complexity) spans 1069–1084 (RCSSLSSLSSAGRPGP). The span at 1088–1101 (GDLDDSDSSLEGLE) shows a compositional bias: acidic residues. Residues 1143–1152 (TPSSSSENYV) are compositionally biased toward polar residues. The stretch at 1150–1169 (NYVQETPLVLSRCSSVSSLG) is repeat 2. Residues 1173–1186 (SPSIASSIPSEPCS) are compositionally biased toward low complexity. Over residues 1202 to 1212 (PGQTMPPSRSK) the composition is skewed to polar residues. Copy 3 of the repeat occupies 1263–1282 (FTVEKPDENFSCASSLSALA). Disordered regions lie at residues 1307 to 1335 (GAGG…PRGA), 1382 to 1497 (PAQE…QSLC), 1510 to 1684 (YGND…LDSV), 1724 to 2031 (LSVG…RGRP), and 2046 to 2232 (LRAA…DVDG). The span at 1390–1410 (TDSAEGTPVNFSSAASLSDET) shows a compositional bias: polar residues. Repeat 4 spans residues 1391–1410 (DSAEGTPVNFSSAASLSDET). Basic and acidic residues-rich tracts occupy residues 1477–1489 (ADKD…RTRG) and 1537–1548 (FTRERPQGRKEA). Repeat unit 5 spans residues 1568 to 1587 (LIADETPPCYSLSSSASSLS). Residues 1578-1589 (SLSSSASSLSEP) show a composition bias toward low complexity. A phosphoserine mark is found at Ser-1585 and Ser-1587. Over residues 1638–1654 (PRRRPPVSGLRRRKPRA) the composition is skewed to basic residues. Basic and acidic residues-rich tracts occupy residues 1655–1671 (TRLD…RGEE) and 1739–1755 (RQAE…EKRG). Residues 1819-1830 (APPCLAQPAAPA) are compositionally biased toward low complexity. A required for localization to microtubules and function in microtubule stabilization region spans residues 1821-1900 (PCLAQPAAPA…PPVTQAAGAL (80 aa)). Over residues 1851–1860 (ELATLSQPPR) the composition is skewed to polar residues. 5 stretches are compositionally biased toward low complexity: residues 1868 to 1886 (LAKT…SQPL), 1971 to 1984 (GLVR…SGSE), 2011 to 2026 (LSSA…GASP), 2049 to 2062 (APRQ…QRPP), and 2113 to 2123 (GAVPAAPASAD). The interval 2067 to 2144 (SPGERPARRT…PLPRVAAPGT (78 aa)) is interaction with MAPRE1 and MAPRE3. Positions 2124-2135 (AARRSSDGEPRP) are enriched in basic and acidic residues. Polar residues predominate over residues 2200-2209 (KTNSSTSPSL).

Belongs to the adenomatous polyposis coli (APC) family. Interacts with PSRC1. Interacts with APC. Interacts with CTNNB1. Interacts with MAPRE1 and MAPRE3. Interacts with TP53BP. Interacts possibly with AXIN2. In terms of tissue distribution, widely expressed (at protein level). Specifically expressed in the CNS.

Its subcellular location is the cytoplasm. It localises to the cytoskeleton. The protein localises to the golgi apparatus. The protein resides in the perinuclear region. Functionally, stabilizes microtubules and may regulate actin fiber dynamics through the activation of Rho family GTPases. May also function in Wnt signaling by promoting the rapid degradation of CTNNB1. This chain is Adenomatous polyposis coli protein 2, found in Homo sapiens (Human).